A 328-amino-acid chain; its full sequence is scyllo-inositol 2-dehydrogenase (NADP(+)) IolU (328 aa).

This sequence belongs to the Gfo/Idh/MocA family.

The enzyme catalyses scyllo-inositol + NADP(+) = scyllo-inosose + NADPH + H(+). In terms of biological role, catalyzes the NADPH-dependent reduction of scyllo-inosose (SIS) to scyllo-inositol (SI) in vitro, but is unable to dehydrogenate scyllo-inositol and myo-inositol. Is less efficient than the functional paralog IolW. Under physiological conditions, may primarily function as an NADPH-dependent oxidoreductase that reduces carbonyl group(s) in its substrates. Cannot use NADH instead of NADPH. The protein is scyllo-inositol 2-dehydrogenase (NADP(+)) IolU of Bacillus subtilis (strain 168).